Consider the following 308-residue polypeptide: D-alanine--D-alanine ligase (308 aa).

The 200-residue stretch at 103–302 (KTVMATAGVP…FDELVQWMVE (200 aa)) folds into the ATP-grasp domain. ATP is bound at residue 130–184 (MAPPYVIKPVADGSSVGVFIVTEDQAHPPQELFRDDWPHGEELLVEKYIAGRELT). Mg(2+) is bound by residues Asp252, Glu269, and Asn271.

It belongs to the D-alanine--D-alanine ligase family. Requires Mg(2+) as cofactor. The cofactor is Mn(2+).

The protein localises to the cytoplasm. The enzyme catalyses 2 D-alanine + ATP = D-alanyl-D-alanine + ADP + phosphate + H(+). It functions in the pathway cell wall biogenesis; peptidoglycan biosynthesis. Functionally, cell wall formation. The protein is D-alanine--D-alanine ligase of Afipia carboxidovorans (strain ATCC 49405 / DSM 1227 / KCTC 32145 / OM5) (Oligotropha carboxidovorans).